The sequence spans 104 residues: Nucleoid-associated protein LSL_1227 (104 aa).

Residues 1-19 (MMMRGMNMQSMMKQMQKLQ) show a composition bias toward low complexity. The interval 1-24 (MMMRGMNMQSMMKQMQKLQKNMKK) is disordered.

Belongs to the YbaB/EbfC family. Homodimer.

The protein resides in the cytoplasm. The protein localises to the nucleoid. Functionally, binds to DNA and alters its conformation. May be involved in regulation of gene expression, nucleoid organization and DNA protection. The chain is Nucleoid-associated protein LSL_1227 from Ligilactobacillus salivarius (strain UCC118) (Lactobacillus salivarius).